A 144-amino-acid chain; its full sequence is Large ribosomal subunit protein uL15 (144 aa).

The disordered stretch occupies residues 1–57; the sequence is MLLNTLSPAAGSKHAPKRLGRGVGSGLGKTGGRGHKGQKSRSGGKVRPGFEGGQMPL. Over residues 21–31 the composition is skewed to gly residues; it reads RGVGSGLGKTG. Residues 32-44 show a composition bias toward basic residues; that stretch reads GRGHKGQKSRSGG.

This sequence belongs to the universal ribosomal protein uL15 family. Part of the 50S ribosomal subunit.

Functionally, binds to the 23S rRNA. The sequence is that of Large ribosomal subunit protein uL15 from Vibrio cholerae serotype O1 (strain ATCC 39541 / Classical Ogawa 395 / O395).